Reading from the N-terminus, the 286-residue chain is Non-homologous end joining protein Ku (286 aa).

The Ku domain maps to 10–175; the sequence is TVGLVSFPVR…EEVREPDFVV (166 aa). Basic and acidic residues predominate over residues 226-242; the sequence is ERQERQRREAGEVRQAD. Residues 226 to 270 form a disordered region; sequence ERQERQRREAGEVRQADETDEAAETEVPEVDIPASRAPGETGGEL. The span at 243-254 shows a compositional bias: acidic residues; sequence ETDEAAETEVPE.

It belongs to the prokaryotic Ku family. Homodimer. Interacts with LigD.

Functionally, with LigD forms a non-homologous end joining (NHEJ) DNA repair enzyme, which repairs dsDNA breaks with reduced fidelity. Binds linear dsDNA with 5'- and 3'- overhangs but not closed circular dsDNA nor ssDNA. Recruits and stimulates the ligase activity of LigD. This is Non-homologous end joining protein Ku from Actinosynnema mirum (strain ATCC 29888 / DSM 43827 / JCM 3225 / NBRC 14064 / NCIMB 13271 / NRRL B-12336 / IMRU 3971 / 101).